Reading from the N-terminus, the 189-residue chain is Peptidyl-tRNA hydrolase (189 aa).

Tyr-14 provides a ligand contact to tRNA. His-19 functions as the Proton acceptor in the catalytic mechanism. TRNA is bound by residues Phe-61, Asn-63, and Asn-109.

The protein belongs to the PTH family. Monomer.

It is found in the cytoplasm. The catalysed reaction is an N-acyl-L-alpha-aminoacyl-tRNA + H2O = an N-acyl-L-amino acid + a tRNA + H(+). In terms of biological role, hydrolyzes ribosome-free peptidyl-tRNAs (with 1 or more amino acids incorporated), which drop off the ribosome during protein synthesis, or as a result of ribosome stalling. Catalyzes the release of premature peptidyl moieties from peptidyl-tRNA molecules trapped in stalled 50S ribosomal subunits, and thus maintains levels of free tRNAs and 50S ribosomes. The chain is Peptidyl-tRNA hydrolase from Sulfurovum sp. (strain NBC37-1).